We begin with the raw amino-acid sequence, 306 residues long: WUSCHEL-related homeobox 13 (306 aa).

A compositionally biased stretch (pro residues) spans 1–11 (MMALGVPPPPS). 3 disordered regions span residues 1-20 (MMAL…GPLR), 103-142 (PRSH…PRPE), and 190-276 (SRSK…ARAT). The span at 126–142 (GEERVPDPKPRRNPRPE) shows a compositional bias: basic and acidic residues. The homeobox; WUS-type DNA-binding region spans 132–196 (DPKPRRNPRP…NRKSRSKNKL (65 aa)). The span at 199-210 (GGTGRAGLGLGG) shows a compositional bias: gly residues. Residues 231–242 (FTPPPILPPQPV) show a composition bias toward pro residues. Positions 243 to 270 (QPQQQLVSPVAAPTSLSSSSSDRSSGSS) are enriched in low complexity.

This sequence belongs to the WUS homeobox family.

It localises to the nucleus. Its function is as follows. Transcription factor which may be involved in developmental processes. The polypeptide is WUSCHEL-related homeobox 13 (WOX13) (Oryza sativa subsp. japonica (Rice)).